A 179-amino-acid polypeptide reads, in one-letter code: ECF RNA polymerase sigma factor SigF (179 aa).

A sigma-70 factor domain-2 region spans residues 33–93; that stretch reads RLRAYFMRRM…KLIDHWRRRK (61 aa). The Polymerase core binding motif lies at 51–64; sequence DLVQETLLAVHLKR. A sigma-70 factor domain-4 region spans residues 123 to 170; that stretch reads ALASLPQRQRMLVSDVKLTGLSLAEAGARAGISEGAAKVALHRALKAL. The segment at residues 145 to 164 is a DNA-binding region (H-T-H motif); sequence LAEAGARAGISEGAAKVALH.

This sequence belongs to the sigma-70 factor family. ECF subfamily.

The protein resides in the cytoplasm. Functionally, sigma factors are initiation factors that promote the attachment of RNA polymerase to specific initiation sites and are then released. Extracytoplasmic function (ECF) sigma factors are held in an inactive form by a cognate anti-sigma factor (NrsF in this case) until they are released. Up-regulates expression of 4 operons (sigF-nrsF, CCNA_02834, CCNA_03001 to CCNA_02999 and CCNA_03363 to CCNA_03366) in response to potassium dichromate (K(2)Cr(2)O(7)) or cadmium chloride (CdCl(2)). Overexpression of sigF leads to higher expression of its regulon. This chain is ECF RNA polymerase sigma factor SigF, found in Caulobacter vibrioides (strain NA1000 / CB15N) (Caulobacter crescentus).